The primary structure comprises 188 residues: FMN-dependent NADPH-azoreductase (188 aa).

This sequence belongs to the azoreductase type 2 family. In terms of assembly, homotetramer. FMN serves as cofactor.

Its function is as follows. Catalyzes the reductive cleavage of azo bond in aromatic azo compounds to the corresponding amines. Requires NADPH, but not NADH, as an electron donor for its activity. The sequence is that of FMN-dependent NADPH-azoreductase (azo1) from Staphylococcus epidermidis (strain ATCC 12228 / FDA PCI 1200).